The chain runs to 296 residues: Nucleotide-binding protein SUB0630 (296 aa).

An ATP-binding site is contributed by 13-20 (GMSGAGKT). 63 to 66 (DMRS) is a GTP binding site.

The protein belongs to the RapZ-like family.

Its function is as follows. Displays ATPase and GTPase activities. The protein is Nucleotide-binding protein SUB0630 of Streptococcus uberis (strain ATCC BAA-854 / 0140J).